Reading from the N-terminus, the 152-residue chain is Endoribonuclease YbeY (152 aa).

Zn(2+)-binding residues include His101, His105, and His111. Positions 132-152 (PSSLIERTTKPAKKAAKRKKR) are disordered. Residues 141-152 (KPAKKAAKRKKR) show a composition bias toward basic residues.

This sequence belongs to the endoribonuclease YbeY family. Requires Zn(2+) as cofactor.

It localises to the cytoplasm. In terms of biological role, single strand-specific metallo-endoribonuclease involved in late-stage 70S ribosome quality control and in maturation of the 3' terminus of the 16S rRNA. In Koribacter versatilis (strain Ellin345), this protein is Endoribonuclease YbeY.